A 248-amino-acid polypeptide reads, in one-letter code: MALLEICCYSMECALTAQQNGADRVELCAAPKEGGLTPSLGVLKSVRQRVTIPVHPIIRPRGGDFCYSDGEFAAILEDVRTVRELGFPGLVTGVLDVDGNVDMPRMEKIMAAAGPLAVTFHRAFDMCANPLNTLNNLAELGITRVLTSGQKSDALQGLSKIMELIAHGDAPIIMAGAGIRAENLHHFLDAGVLEVHSSAGAWQASPMRYRNQGLSMSSDAHADEYSRYVVDGAAVAEMKGIIERHQAK.

Belongs to the CutC family. As to quaternary structure, homodimer.

Its subcellular location is the cytoplasm. In Escherichia coli (strain SMS-3-5 / SECEC), this protein is PF03932 family protein CutC.